Consider the following 382-residue polypeptide: tRNA(Ile)-lysidine synthase (382 aa).

50–55 (SGGRDS) provides a ligand contact to ATP.

It belongs to the tRNA(Ile)-lysidine synthase family.

It localises to the cytoplasm. The enzyme catalyses cytidine(34) in tRNA(Ile2) + L-lysine + ATP = lysidine(34) in tRNA(Ile2) + AMP + diphosphate + H(+). Ligates lysine onto the cytidine present at position 34 of the AUA codon-specific tRNA(Ile) that contains the anticodon CAU, in an ATP-dependent manner. Cytidine is converted to lysidine, thus changing the amino acid specificity of the tRNA from methionine to isoleucine. This chain is tRNA(Ile)-lysidine synthase, found in Bifidobacterium animalis subsp. lactis (strain AD011).